The sequence spans 342 residues: uncharacterized protein (342 aa).

Residues 155–309 (TYGIHINGYV…KPNCALVMVD (155 aa)) enclose the Nudix hydrolase domain.

This is an uncharacterized protein from Saccharomyces cerevisiae (strain ATCC 204508 / S288c) (Baker's yeast).